The following is a 126-amino-acid chain: Fluoride-specific ion channel FluC (126 aa).

4 helical membrane-spanning segments follow: residues methionine 1–aspartate 21, leucine 40–alanine 60, alanine 72–valine 92, and methionine 104–leucine 124. Na(+) contacts are provided by glycine 79 and threonine 82.

This sequence belongs to the fluoride channel Fluc/FEX (TC 1.A.43) family.

The protein localises to the cell membrane. The enzyme catalyses fluoride(in) = fluoride(out). Its activity is regulated as follows. Na(+) is not transported, but it plays an essential structural role and its presence is essential for fluoride channel function. Fluoride-specific ion channel. Important for reducing fluoride concentration in the cell, thus reducing its toxicity. The polypeptide is Fluoride-specific ion channel FluC (Renibacterium salmoninarum (strain ATCC 33209 / DSM 20767 / JCM 11484 / NBRC 15589 / NCIMB 2235)).